We begin with the raw amino-acid sequence, 61 residues long: Metallothionein-1B (61 aa).

The interval 1-29 (MDPNCSCPTSGSCSCAGSCTCKACRCPSC) is beta. Residues Cys-5, Cys-7, Cys-13, Cys-15, Cys-19, Cys-21, Cys-24, Cys-26, Cys-29, Cys-33, Cys-34, Cys-36, Cys-37, Cys-41, Cys-44, Cys-48, Cys-50, Cys-57, Cys-59, and Cys-60 each contribute to the a divalent metal cation site. The segment at 30–61 (KKSCCSCCPVGCAKCAQGCVCKGASDKCSCCA) is alpha.

The protein belongs to the metallothionein superfamily. Type 1 family.

In terms of biological role, metallothioneins have a high content of cysteine residues that bind various heavy metals; these proteins are transcriptionally regulated by both heavy metals and glucocorticoids. This is Metallothionein-1B (MT1B) from Ovis aries (Sheep).